Consider the following 166-residue polypeptide: Co-chaperone protein HscB homolog (166 aa).

The J domain maps to 3 to 75; it reads QYFTLFRIEP…IDRAAYLLKT (73 aa).

Belongs to the HscB family. As to quaternary structure, interacts with HscA and stimulates its ATPase activity.

Its function is as follows. Co-chaperone involved in the maturation of iron-sulfur cluster-containing proteins. Seems to help targeting proteins to be folded toward HscA. The protein is Co-chaperone protein HscB homolog of Neisseria meningitidis serogroup C (strain 053442).